A 286-amino-acid chain; its full sequence is 4-diphosphocytidyl-2-C-methyl-D-erythritol kinase (286 aa).

The active site involves Lys12. ATP is bound at residue Pro96–Ala106. Asp138 is an active-site residue.

This sequence belongs to the GHMP kinase family. IspE subfamily.

It catalyses the reaction 4-CDP-2-C-methyl-D-erythritol + ATP = 4-CDP-2-C-methyl-D-erythritol 2-phosphate + ADP + H(+). It participates in isoprenoid biosynthesis; isopentenyl diphosphate biosynthesis via DXP pathway; isopentenyl diphosphate from 1-deoxy-D-xylulose 5-phosphate: step 3/6. Its function is as follows. Catalyzes the phosphorylation of the position 2 hydroxy group of 4-diphosphocytidyl-2C-methyl-D-erythritol. This Nitratidesulfovibrio vulgaris (strain ATCC 29579 / DSM 644 / CCUG 34227 / NCIMB 8303 / VKM B-1760 / Hildenborough) (Desulfovibrio vulgaris) protein is 4-diphosphocytidyl-2-C-methyl-D-erythritol kinase.